The following is a 144-amino-acid chain: Large ribosomal subunit protein uL11 (144 aa).

This sequence belongs to the universal ribosomal protein uL11 family. In terms of assembly, part of the ribosomal stalk of the 50S ribosomal subunit. Interacts with L10 and the large rRNA to form the base of the stalk. L10 forms an elongated spine to which L12 dimers bind in a sequential fashion forming a multimeric L10(L12)X complex. In terms of processing, one or more lysine residues are methylated.

Forms part of the ribosomal stalk which helps the ribosome interact with GTP-bound translation factors. The sequence is that of Large ribosomal subunit protein uL11 from Neisseria meningitidis serogroup B (strain ATCC BAA-335 / MC58).